A 307-amino-acid polypeptide reads, in one-letter code: Isethionate sulfite-lyase activating enzyme (307 aa).

Residues 22–307 form the Radical SAM core domain; sequence HDGPGIRTVV…EAVVAQTADS (286 aa). Cys36, Cys40, Cys43, Cys62, Cys68, Cys71, Cys75, Cys95, Cys98, Cys102, and Cys106 together coordinate [4Fe-4S] cluster. Position 42-44 (42-44) interacts with S-adenosyl-L-methionine; that stretch reads WCS. 2 consecutive 4Fe-4S ferredoxin-type domains span residues 53 to 85 and 86 to 117; these read VELA…RAED and DTIS…YGAH. Residues Gly146, 195–197, and His268 each bind S-adenosyl-L-methionine; that span reads DIK.

Belongs to the organic radical-activating enzymes family. Monomer. It depends on [4Fe-4S] cluster as a cofactor.

It carries out the reaction glycyl-[protein] + reduced [flavodoxin] + S-adenosyl-L-methionine = glycin-2-yl radical-[protein] + semiquinone [flavodoxin] + 5'-deoxyadenosine + L-methionine + H(+). The protein operates within organosulfur degradation; alkanesulfonate degradation. Involved in an anaerobic respiration pathway that converts the sulfonate isethionate (2-hydroxyethanesulfonate) to ammonia, acetate and sulfide. Catalyzes activation of the isethionate sulfite-lyase IseG under anaerobic conditions by generation of an organic free radical on a glycine residue, via a homolytic cleavage of S-adenosyl-L-methionine (SAM). This Nitratidesulfovibrio vulgaris (strain ATCC 29579 / DSM 644 / CCUG 34227 / NCIMB 8303 / VKM B-1760 / Hildenborough) (Desulfovibrio vulgaris) protein is Isethionate sulfite-lyase activating enzyme.